Reading from the N-terminus, the 115-residue chain is Large ribosomal subunit protein bL19 (115 aa).

The protein belongs to the bacterial ribosomal protein bL19 family.

In terms of biological role, this protein is located at the 30S-50S ribosomal subunit interface and may play a role in the structure and function of the aminoacyl-tRNA binding site. This chain is Large ribosomal subunit protein bL19 (rplS), found in Thermotoga maritima (strain ATCC 43589 / DSM 3109 / JCM 10099 / NBRC 100826 / MSB8).